The primary structure comprises 307 residues: Inner spore coat protein H-like protein (307 aa).

Belongs to the CotH family.

Its subcellular location is the spore coat. Functionally, involved in the assembly of several proteins in the inner and outer layer of the spore coat. The protein is Inner spore coat protein H-like protein (yisJ) of Bacillus subtilis (strain 168).